The chain runs to 87 residues: Small ribosomal subunit protein bS20 (87 aa).

The segment at 1 to 20 is disordered; that stretch reads MANSAQARKRARTALKQRAH. Positions 7-19 are enriched in basic residues; that stretch reads ARKRARTALKQRA.

The protein belongs to the bacterial ribosomal protein bS20 family.

Its function is as follows. Binds directly to 16S ribosomal RNA. This is Small ribosomal subunit protein bS20 from Chromobacterium violaceum (strain ATCC 12472 / DSM 30191 / JCM 1249 / CCUG 213 / NBRC 12614 / NCIMB 9131 / NCTC 9757 / MK).